The following is a 753-amino-acid chain: Inactive protein-tyrosine phosphatase egg-4 (753 aa).

2 disordered regions span residues 26 to 46 and 75 to 145; these read TSLQSFCSGNTDDSSADSTDN and SFRK…SGHG. Low complexity predominate over residues 35 to 46; that stretch reads NTDDSSADSTDN. Composition is skewed to basic and acidic residues over residues 84 to 94 and 129 to 145; these read AQKDRRSKERL and VSEKPKDEGRREDSGHG. Positions 408 to 661 constitute a Tyrosine-protein phosphatase domain; that stretch reads MERRFEILEN…IFVHRLVAFF (254 aa).

The protein belongs to the protein-tyrosine phosphatase family. Part of a complex, consisting of pseudophosphatases egg-3, egg-4, egg-5 and kinase mbk-2; this complex is required for the oocyte-to-zygote transition. Interacts (via tyrosine-protein phosphatase domain) with kinase mbk-2 (via 'Tyr-619' and 'Tyr-621'); mbk-2 tyrosine phosphorylation enhances the interaction. The interaction inhibits mbk-2 kinase activity and is required for mbk-2 oocyte cortex localization. Interacts with egg-3.

It is found in the cytoplasm. The protein resides in the cell cortex. Functionally, inactive phosphatase which acts redundantly with egg-5 in the oocyte-to-zygote transition. Required for the polarization of cortical actin cytoskeleton rearrangement in the oocyte before and after fertilization. Together with egg-5, required for the cortical localization of kinase mbk-2 and for the inhibition of mbk-2 kinase activity in maturing oocyte until the end of meiosis I. Also required for kinase mbk-2, pseudophosphatase egg-3 and chitin synthase chs-1 localization to cytoplasmic foci after fertilization. This is Inactive protein-tyrosine phosphatase egg-4 from Caenorhabditis elegans.